A 120-amino-acid polypeptide reads, in one-letter code: Large ribosomal subunit protein uL18 (120 aa).

Belongs to the universal ribosomal protein uL18 family. In terms of assembly, part of the 50S ribosomal subunit; part of the 5S rRNA/L5/L18/L25 subcomplex. Contacts the 5S and 23S rRNAs.

This is one of the proteins that bind and probably mediate the attachment of the 5S RNA into the large ribosomal subunit, where it forms part of the central protuberance. The chain is Large ribosomal subunit protein uL18 from Treponema denticola (strain ATCC 35405 / DSM 14222 / CIP 103919 / JCM 8153 / KCTC 15104).